Consider the following 89-residue polypeptide: MKFPAVKVLIISLLITSSLFILSTADSSPCGGKCNVRCSKAGRQDRCLKYCNICCEKCNYCVPSGTYGNKDECPCYRDMKNSKGTSKCP.

Positions 1–25 (MKFPAVKVLIISLLITSSLFILSTA) are cleaved as a signal peptide.

Belongs to the GASA family. Six disulfide bonds may be present. In terms of tissue distribution, expressed in vasculature of rosette leaves and roots, cotyledon and root tips and developing seeds.

The protein resides in the secreted. Gibberellin-regulated protein that may function in hormonal controlled steps of development such as seed germination, flowering and seed maturation. The protein is Gibberellin-regulated protein 10 (GASA10) of Arabidopsis thaliana (Mouse-ear cress).